We begin with the raw amino-acid sequence, 104 residues long: Large ribosomal subunit protein bL21 (104 aa).

Belongs to the bacterial ribosomal protein bL21 family. As to quaternary structure, part of the 50S ribosomal subunit. Contacts protein L20.

Functionally, this protein binds to 23S rRNA in the presence of protein L20. This is Large ribosomal subunit protein bL21 from Allorhizobium ampelinum (strain ATCC BAA-846 / DSM 112012 / S4) (Agrobacterium vitis (strain S4)).